A 393-amino-acid chain; its full sequence is NAD(P)H-quinone oxidoreductase subunit H, chloroplastic (393 aa).

The protein belongs to the complex I 49 kDa subunit family. As to quaternary structure, NDH is composed of at least 16 different subunits, 5 of which are encoded in the nucleus.

The protein localises to the plastid. It is found in the chloroplast thylakoid membrane. The enzyme catalyses a plastoquinone + NADH + (n+1) H(+)(in) = a plastoquinol + NAD(+) + n H(+)(out). It carries out the reaction a plastoquinone + NADPH + (n+1) H(+)(in) = a plastoquinol + NADP(+) + n H(+)(out). Functionally, NDH shuttles electrons from NAD(P)H:plastoquinone, via FMN and iron-sulfur (Fe-S) centers, to quinones in the photosynthetic chain and possibly in a chloroplast respiratory chain. The immediate electron acceptor for the enzyme in this species is believed to be plastoquinone. Couples the redox reaction to proton translocation, and thus conserves the redox energy in a proton gradient. This chain is NAD(P)H-quinone oxidoreductase subunit H, chloroplastic, found in Oryza nivara (Indian wild rice).